The chain runs to 512 residues: Maturase K (512 aa).

This sequence belongs to the intron maturase 2 family. MatK subfamily.

The protein resides in the plastid. Its subcellular location is the chloroplast. Its function is as follows. Usually encoded in the trnK tRNA gene intron. Probably assists in splicing its own and other chloroplast group II introns. This Ginkgo biloba (Ginkgo) protein is Maturase K.